Reading from the N-terminus, the 181-residue chain is Putative ankyrin repeat protein RF_0782 (181 aa).

ANK repeat units lie at residues 24–53 (YHYS…DINF) and 54–83 (GSTP…NTQI).

The chain is Putative ankyrin repeat protein RF_0782 from Rickettsia felis (strain ATCC VR-1525 / URRWXCal2) (Rickettsia azadi).